The primary structure comprises 171 residues: 3-hydroxydecanoyl-[acyl-carrier-protein] dehydratase (171 aa).

H70 is an active-site residue.

It belongs to the thioester dehydratase family. FabA subfamily. In terms of assembly, homodimer.

It localises to the cytoplasm. The catalysed reaction is a (3R)-hydroxyacyl-[ACP] = a (2E)-enoyl-[ACP] + H2O. The enzyme catalyses (3R)-hydroxydecanoyl-[ACP] = (2E)-decenoyl-[ACP] + H2O. It catalyses the reaction (2E)-decenoyl-[ACP] = (3Z)-decenoyl-[ACP]. It participates in lipid metabolism; fatty acid biosynthesis. Necessary for the introduction of cis unsaturation into fatty acids. Catalyzes the dehydration of (3R)-3-hydroxydecanoyl-ACP to E-(2)-decenoyl-ACP and then its isomerization to Z-(3)-decenoyl-ACP. Can catalyze the dehydratase reaction for beta-hydroxyacyl-ACPs with saturated chain lengths up to 16:0, being most active on intermediate chain length. In Histophilus somni (strain 129Pt) (Haemophilus somnus), this protein is 3-hydroxydecanoyl-[acyl-carrier-protein] dehydratase.